The sequence spans 961 residues: MDLNVKQSGIHSVALHTTYFQNRSGKVYKRAEERYLRNDLSCGLAQCGTCKDFGTNPLLKIENPVRNAKVGRHALIVDSTSLIRFYDLFDSSLLRDLIVTQTVWEGVKAKAVPAYKKMNSLCYEDAKDRFHVFMNEFHCETFSESSKFEDLSRGEELLLSTALYLKTHWQKHNVAPVVLVFDEDSKKRMENHYQHVMYLKEYIQNLEDPGKQALLDQMAAYESSGNGNEKQIFDEYLSHDRIMEGIASGTIKRGNFSVSRENYREATVIIDDQLTSWFITGNNCNRAVNGDTVAVQLLPEDQWTAPEKKIRLRDVEEYVKTADDMGNEDEENDDENDEPKAKKSKKMTVSTAKVVGIIKRNWREYCGMLLPSTVKGARRHLFCPAERLIPRIRIETEQAETLSQQRIVVAIDHWPRDSKYPLGHYVRSIGEMGSRETENEVLLLEHDIPHAPFSESVLDCLPREEWEPDLTENRGPLPRVDLRDLTICSVDPLGCTDIDDALHCKQIGEDLFEVGVHIADVTHFVRPGTAIDDEAALRGTTVYLCDRRIDMLPCLLSSNLCSLRGEEERYAFSCIWTMTSSADIQSVKYHKSLIKSKAALTYEKAQEIIDDPKEQNDVALGLRGLMKLSKVLNARRTGNGALTLASSEVRFDMDWESRTPKKVMEKQHLDTHSMVEEFMLLANISVAEKILEEYPDCALLRRHPVPLKESYKPLVEAARHRGFEIIVESGKGLADSLNRCVDKKNPMLNRLLRMLTTRCMTQAVYFSAGTVPVPQYQHFGLACAIYTHFTSPIRRYADVIVHRLLAAAIGADDIQSGLLNQARCTKICTNINYRHKQAQYAGRASVQLNVVRYFKGKVETCEGFVMGVRNNGIQVFVPKYGLESIIVLQTSAASGTTIDVEEMSVKVNGDVVIKELEPVTVRISVNEKNQQRPRVELQLIKPAIPGLSVDFDLSSSEGLGL.

Positions 73 to 188 constitute a PINc domain; that stretch reads HALIVDSTSL…LVFDEDSKKR (116 aa). Residues 232-338 form the CSD1 domain; that stretch reads IFDEYLSHDR…DEENDDENDE (107 aa). Residues 322 to 346 are disordered; that stretch reads ADDMGNEDEENDDENDEPKAKKSKK. Acidic residues predominate over residues 325–337; it reads MGNEDEENDDEND. The CSD2 domain occupies 381–447; that stretch reads LFCPAERLIP…ENEVLLLEHD (67 aa). An RNB domain is found at 479–809; sequence RVDLRDLTIC…IVHRLLAAAI (331 aa).

The protein belongs to the RNR ribonuclease family. In terms of assembly, component of the RNA exosome complex. As to expression, ubiquitously expressed.

The protein resides in the nucleus. It localises to the nucleoplasm. Functionally, putative catalytic component of the RNA exosome complex which has 3'-&gt;5' exoribonuclease activity and participates in a multitude of cellular RNA processing and degradation events. Has both 3'-5' exonuclease and endonuclease activities. Involved in regulation of antisense ribosomal siRNA production. The protein is Probable exosome complex exonuclease RRP44 (dis-3) of Caenorhabditis elegans.